The chain runs to 265 residues: uncharacterized protein (265 aa).

2 disordered regions span residues 62–94 (RNKK…ALGK) and 118–149 (MVPG…RPNP). The segment covering 126–139 (DGPKKSDTDIKDAV) has biased composition (basic and acidic residues).

This is an uncharacterized protein from Homo sapiens (Human).